The chain runs to 956 residues: Golgin candidate 5 (956 aa).

2 disordered regions span residues 70-230 and 278-298; these read MSFM…QHKI and IFES…SSDE. 2 stretches are compositionally biased toward basic and acidic residues: residues 77–89 and 118–129; these read SDEK…DSVR and ANKETNVRREAD. Polar residues-rich tracts occupy residues 160–177 and 184–193; these read EYSL…SLQP and TASQDSQPEQ. Residues 206–219 show a composition bias toward basic and acidic residues; the sequence is SEAKEVTVENKDTV. Residues 333-765 are a coiled coil; that stretch reads SDSADVILEL…LIQKDLEREK (433 aa). S793 carries the post-translational modification Phosphoserine. Positions 851–951 form a coiled coil; it reads SAYEATLRQK…EMYREQVNML (101 aa).

As to quaternary structure, interacts with RABH1B and RABH1C, but not with RABD1 or RABD2A.

It localises to the golgi apparatus. The protein localises to the cytoplasm. Its function is as follows. Golgi matrix protein playing a role in tethering of vesicles to Golgi membranes and in maintaining the overall structure of the Golgi apparatus. The protein is Golgin candidate 5 (GC5) of Arabidopsis thaliana (Mouse-ear cress).